We begin with the raw amino-acid sequence, 238 residues long: Ribonuclease PH (238 aa).

Residues R86 and 124–126 (GTR) contribute to the phosphate site.

This sequence belongs to the RNase PH family. Homohexameric ring arranged as a trimer of dimers.

It catalyses the reaction tRNA(n+1) + phosphate = tRNA(n) + a ribonucleoside 5'-diphosphate. Phosphorolytic 3'-5' exoribonuclease that plays an important role in tRNA 3'-end maturation. Removes nucleotide residues following the 3'-CCA terminus of tRNAs; can also add nucleotides to the ends of RNA molecules by using nucleoside diphosphates as substrates, but this may not be physiologically important. Probably plays a role in initiation of 16S rRNA degradation (leading to ribosome degradation) during starvation. In Chromobacterium violaceum (strain ATCC 12472 / DSM 30191 / JCM 1249 / CCUG 213 / NBRC 12614 / NCIMB 9131 / NCTC 9757 / MK), this protein is Ribonuclease PH.